The sequence spans 161 residues: EP300-interacting inhibitor of differentiation 2B (161 aa).

2 disordered regions span residues 1-26 (MAEPTGLLEMSELPGDSSVPQVGTAS) and 54-77 (ARSMARMPGPVPGPIPSSVPGLAS).

As to quaternary structure, homodimer and heterodimer with EID2. Interacts with HDAC1 and HDAC2.

Its subcellular location is the nucleus. Acts as a repressor of MYOD-dependent transcription, glucocorticoid receptor-dependent transcription, and muscle differentiation. The protein is EP300-interacting inhibitor of differentiation 2B of Homo sapiens (Human).